The chain runs to 138 residues: Large ribosomal subunit protein bL12c (138 aa).

The protein belongs to the bacterial ribosomal protein bL12 family. Homodimer. Part of the ribosomal stalk of the 50S ribosomal subunit. Forms a multimeric L10(L12)X complex, where L10 forms an elongated spine to which 2 to 4 L12 dimers bind in a sequential fashion. Binds GTP-bound translation factors.

Its subcellular location is the plastid. In terms of biological role, forms part of the ribosomal stalk which helps the ribosome interact with GTP-bound translation factors. Is thus essential for accurate translation. The polypeptide is Large ribosomal subunit protein bL12c (Euglena longa (Euglenophycean alga)).